A 1010-amino-acid chain; its full sequence is Sodium/potassium-transporting ATPase subunit alpha-3 (1010 aa).

Residues 1 to 21 are disordered; sequence MGDKDDRFPKKKKGGTKDMDA. Residues 1 to 74 lie on the Cytoplasmic side of the membrane; sequence MGDKDDRFPK…NALTPPPTTP (74 aa). The interaction with phosphoinositide-3 kinase stretch occupies residues 69–71; the sequence is PPP. The chain crosses the membrane as a helical span at residues 75–95; sequence EWVKFCRQLFGGFSILLWTGA. Residues 96 to 118 lie on the Extracellular side of the membrane; the sequence is ILCFLAYAIQAATEDEPAGDNLY. A helical membrane pass occupies residues 119–139; sequence LGIVLTAVVVITGCFSYFQEA. Over 140 to 275 the chain is Cytoplasmic; sequence KSSKIMESFK…TGKTPIAVEI (136 aa). The segment covering 201–216 has biased composition (polar residues); that stretch reads DNSSLTGESEPQSRSP. A disordered region spans residues 201–221; the sequence is DNSSLTGESEPQSRSPDCTHD. The chain crosses the membrane as a helical span at residues 276–295; the sequence is EHFIHIITGVAVFLGVTFFI. At 296–307 the chain is on the extracellular side; that stretch reads LAIILGYTWLKA. A helical transmembrane segment spans residues 308-325; it reads VIFLIGIIVANVPEGLLA. Residues 326 to 759 lie on the Cytoplasmic side of the membrane; the sequence is TVTVCLTLTA…EEGRLIFDNL (434 aa). The active-site 4-aspartylphosphate intermediate is Asp363. Residues Asp704 and Asp708 each coordinate Mg(2+). The helical transmembrane segment at 760 to 779 threads the bilayer; sequence KKSIAYTLTSNIPEITPFLF. Residues 780-789 are Extracellular-facing; sequence FIIVNIPLAL. The helical transmembrane segment at 790–810 threads the bilayer; sequence GTITILCIDLGTDMGSAISLA. Residues 811–830 lie on the Cytoplasmic side of the membrane; that stretch reads YETAESDIMKRQPRNPCRDK. A helical membrane pass occupies residues 831–853; the sequence is LVNERLISIAYGQIGMIQALGGF. The Extracellular segment spans residues 854–905; the sequence is FSYFVILAENGFLPSQLVGIRLNWDDRSLNDLEDSYGQQWTYEQRKIVEFTC. Residues 906-925 form a helical membrane-spanning segment; the sequence is HTAFFVSIVVVQWADLIICK. Topologically, residues 926-938 are cytoplasmic; that stretch reads TRRNSVFQQGMKN. Ser930 is subject to Phosphoserine; by PKA. A helical membrane pass occupies residues 939 to 957; the sequence is KILIFGLFEETALAAFLSY. Over 958-972 the chain is Extracellular; sequence CPGMDVALRMYPLKP. A helical membrane pass occupies residues 973-993; the sequence is TWWFWAFPYSFLIFVYDEARK. Topologically, residues 994-1010 are cytoplasmic; it reads LILCRNPGGWVEKETYY.

The protein belongs to the cation transport ATPase (P-type) (TC 3.A.3) family. Type IIC subfamily. The sodium/potassium-transporting ATPase is composed of a catalytic alpha subunit, an auxiliary non-catalytic beta subunit and an additional regulatory subunit.

The protein localises to the cell membrane. The catalysed reaction is K(+)(out) + Na(+)(in) + ATP + H2O = K(+)(in) + Na(+)(out) + ADP + phosphate + H(+). Its function is as follows. This is the catalytic component of the active enzyme, which catalyzes the hydrolysis of ATP coupled with the exchange of sodium and potassium ions across the plasma membrane. This action creates the electrochemical gradient of sodium and potassium ions, providing the energy for active transport of various nutrients. This Oreochromis mossambicus (Mozambique tilapia) protein is Sodium/potassium-transporting ATPase subunit alpha-3 (atp1a3).